The primary structure comprises 512 residues: ATP synthase subunit alpha (512 aa).

Position 169-176 (169-176 (GDRKTGKT)) interacts with ATP.

It belongs to the ATPase alpha/beta chains family. As to quaternary structure, F-type ATPases have 2 components, CF(1) - the catalytic core - and CF(0) - the membrane proton channel. CF(1) has five subunits: alpha(3), beta(3), gamma(1), delta(1), epsilon(1). CF(0) has three main subunits: a(1), b(2) and c(9-12). The alpha and beta chains form an alternating ring which encloses part of the gamma chain. CF(1) is attached to CF(0) by a central stalk formed by the gamma and epsilon chains, while a peripheral stalk is formed by the delta and b chains.

It is found in the cell membrane. The enzyme catalyses ATP + H2O + 4 H(+)(in) = ADP + phosphate + 5 H(+)(out). Its function is as follows. Produces ATP from ADP in the presence of a proton gradient across the membrane. The alpha chain is a regulatory subunit. The polypeptide is ATP synthase subunit alpha (Limosilactobacillus fermentum (strain NBRC 3956 / LMG 18251) (Lactobacillus fermentum)).